The sequence spans 342 residues: UDP-glucuronic acid decarboxylase 3 (342 aa).

Positions 1 to 11 are enriched in polar residues; it reads MAATSEKQNTT. The disordered stretch occupies residues 1–22; that stretch reads MAATSEKQNTTKPPPSPSPLRN. 61 to 86 is an NAD(+) binding site; the sequence is DNYFTGSKENLKKWIGHPRFELIRHD. Arginine 170 lines the substrate pocket. The Proton acceptor role is filled by tyrosine 173. 173-177 is a binding site for NAD(+); it reads YDEGK. Position 202 (asparagine 202) interacts with substrate. Residue arginine 214 coordinates NAD(+). Residues 215–219, 232–239, and 299–303 contribute to the substrate site; these read VVSNF, QKPGTQTR, and DPRQR.

The protein belongs to the NAD(P)-dependent epimerase/dehydratase family. UDP-glucuronic acid decarboxylase subfamily. It depends on NAD(+) as a cofactor. As to expression, ubiquitous.

It localises to the cytoplasm. The enzyme catalyses UDP-alpha-D-glucuronate + H(+) = UDP-alpha-D-xylose + CO2. The protein operates within nucleotide-sugar biosynthesis; UDP-alpha-D-xylose biosynthesis; UDP-alpha-D-xylose from UDP-alpha-D-glucuronate: step 1/1. Functionally, catalyzes the NAD-dependent decarboxylation of UDP-glucuronic acid to UDP-xylose. Necessary for the biosynthesis of the core tetrasaccharide in glycosaminoglycan biosynthesis. This is UDP-glucuronic acid decarboxylase 3 (UXS3) from Arabidopsis thaliana (Mouse-ear cress).